Consider the following 273-residue polypeptide: 2-dehydro-3-deoxyphosphooctonate aldolase (273 aa).

Belongs to the KdsA family.

The protein resides in the cytoplasm. The enzyme catalyses D-arabinose 5-phosphate + phosphoenolpyruvate + H2O = 3-deoxy-alpha-D-manno-2-octulosonate-8-phosphate + phosphate. It functions in the pathway carbohydrate biosynthesis; 3-deoxy-D-manno-octulosonate biosynthesis; 3-deoxy-D-manno-octulosonate from D-ribulose 5-phosphate: step 2/3. It participates in bacterial outer membrane biogenesis; lipopolysaccharide biosynthesis. This is 2-dehydro-3-deoxyphosphooctonate aldolase from Nitratidesulfovibrio vulgaris (strain ATCC 29579 / DSM 644 / CCUG 34227 / NCIMB 8303 / VKM B-1760 / Hildenborough) (Desulfovibrio vulgaris).